The following is a 441-amino-acid chain: Glutamyl-tRNA reductase (441 aa).

Substrate is bound by residues 49 to 52 (TCNR), Ser109, 114 to 116 (EGQ), and Gln120. The active-site Nucleophile is the Cys50. 198–203 (GAGRMS) provides a ligand contact to NADP(+).

It belongs to the glutamyl-tRNA reductase family. As to quaternary structure, homodimer.

The catalysed reaction is (S)-4-amino-5-oxopentanoate + tRNA(Glu) + NADP(+) = L-glutamyl-tRNA(Glu) + NADPH + H(+). The protein operates within porphyrin-containing compound metabolism; protoporphyrin-IX biosynthesis; 5-aminolevulinate from L-glutamyl-tRNA(Glu): step 1/2. It participates in porphyrin-containing compound metabolism; chlorophyll biosynthesis. Catalyzes the NADPH-dependent reduction of glutamyl-tRNA(Glu) to glutamate 1-semialdehyde (GSA). The chain is Glutamyl-tRNA reductase from Prochlorococcus marinus (strain NATL2A).